A 474-amino-acid chain; its full sequence is Putative pectinesterase/pectinesterase inhibitor 38 (474 aa).

The pectinesterase inhibitor 38 stretch occupies residues 1-130; sequence MVFGNEMCDE…HSLESITIDV (130 aa). Asn-80 carries an N-linked (GlcNAc...) asparagine glycan. Residues 164 to 461 are pectinesterase 38; that stretch reads DVVVAQDGSG…TLPKFIDSAS (298 aa). Residues Thr-241 and Gln-271 each coordinate substrate. Catalysis depends on Asp-294, which acts as the Proton donor; for pectinesterase activity. A disulfide bridge links Cys-308 with Cys-328. Asp-315 serves as the catalytic Nucleophile; for pectinesterase activity. Residue Asn-351 is glycosylated (N-linked (GlcNAc...) asparagine). Substrate-binding residues include Arg-380 and Trp-382. N-linked (GlcNAc...) asparagine glycosylation occurs at Asn-409.

The protein in the N-terminal section; belongs to the PMEI family. In the C-terminal section; belongs to the pectinesterase family.

The protein resides in the secreted. The protein localises to the cell wall. The enzyme catalyses [(1-&gt;4)-alpha-D-galacturonosyl methyl ester](n) + n H2O = [(1-&gt;4)-alpha-D-galacturonosyl](n) + n methanol + n H(+). Its pathway is glycan metabolism; pectin degradation; 2-dehydro-3-deoxy-D-gluconate from pectin: step 1/5. In terms of biological role, acts in the modification of cell walls via demethylesterification of cell wall pectin. The protein is Putative pectinesterase/pectinesterase inhibitor 38 (PME38) of Arabidopsis thaliana (Mouse-ear cress).